The following is a 602-amino-acid chain: Auxin response factor 18 (602 aa).

A DNA-binding region (TF-B3) is located at residues 128–230 (FVKILTASDT…DLRVGVRRLA (103 aa)). The interval 359–396 (TSPISTPAQQPQSKCKRSRPIEPSVKTPAPPSFLYSLP) is disordered. Over residues 360-371 (SPISTPAQQPQS) the composition is skewed to polar residues. A PB1 domain is found at 489-581 (RSRTKVQMQG…EVKKMTTKLK (93 aa)).

This sequence belongs to the ARF family. Homodimers and heterodimers.

It localises to the nucleus. Functionally, auxin response factors (ARFs) are transcriptional factors that bind specifically to the DNA sequence 5'-TGTCTC-3' found in the auxin-responsive promoter elements (AuxREs). Could act as transcriptional activator or repressor. Formation of heterodimers with Aux/IAA proteins may alter their ability to modulate early auxin response genes expression. The protein is Auxin response factor 18 (ARF18) of Arabidopsis thaliana (Mouse-ear cress).